The following is a 51-amino-acid chain: Protein SspM (51 aa).

The protein belongs to the alpha/beta-type SASP family.

In Mycolicibacterium phlei (Mycobacterium phlei), this protein is Protein SspM (sspM).